Here is a 366-residue protein sequence, read N- to C-terminus: 5-hydroxytryptamine receptor 1F (366 aa).

Residues 1–24 (MDFLNSSDQNLTSEELLHRMPSKI) lie on the Extracellular side of the membrane. Asn5 and Asn10 each carry an N-linked (GlcNAc...) asparagine glycan. A helical transmembrane segment spans residues 25-49 (LVSLTLSGLALMTTTINSLVIAAII). The Cytoplasmic segment spans residues 50-59 (VTRKLHHPAN). The chain crosses the membrane as a helical span at residues 60-81 (YLICSLAVTDFLVAVLVMPFSI). The Extracellular segment spans residues 82-96 (VYIVRESWIMGQVLC). Cys96 and Cys172 form a disulfide bridge. The helical transmembrane segment at 97–119 (DIWLSVDIICCTCSILHLSAIAL) threads the bilayer. Positions 103 and 107 each coordinate serotonin. Residues 120 to 122 (DRY) carry the DRY motif; important for ligand-induced conformation changes motif. Residues 120–139 (DRYRAITDAVEYARKRTPKQ) lie on the Cytoplasmic side of the membrane. The chain crosses the membrane as a helical span at residues 140–159 (AGIMITIVWIISVFISMPPL). Over 160-178 (FWRHQGTSRDDECIIKHDH) the chain is Extracellular. Residues 179 to 202 (IVSTIYSTFGAFYIPLVLILILYY) traverse the membrane as a helical segment. Residues 203 to 291 (KIYKAAKTLY…KISGTRERKA (89 aa)) are Cytoplasmic-facing. A helical transmembrane segment spans residues 292–315 (ATTLGLILGAFVICWLPFFVKELV). Residues 316–327 (VNVCEKCKISEE) lie on the Extracellular side of the membrane. The helical transmembrane segment at 328–350 (MANFLAWLGYLNSLINPLIYTIF) threads the bilayer. The short motif at 343–347 (NPLIY) is the NPxxY motif; important for ligand-induced conformation changes and signaling element. The Cytoplasmic segment spans residues 351-366 (NEDFKKAFQKLVRCQY).

Belongs to the G-protein coupled receptor 1 family.

It localises to the cell membrane. Its function is as follows. G-protein coupled receptor for 5-hydroxytryptamine (serotonin). Also functions as a receptor for various alkaloids and psychoactive substances. Ligand binding causes a conformation change that triggers signaling via guanine nucleotide-binding proteins (G proteins) and modulates the activity of downstream effectors, such as adenylate cyclase. HTR1F is coupled to G(i)/G(o) G alpha proteins and mediates inhibitory neurotransmission by inhibiting adenylate cyclase activity. The protein is 5-hydroxytryptamine receptor 1F (HTR1F) of Cavia porcellus (Guinea pig).